The following is a 383-amino-acid chain: Adaptive-response sensory kinase SasA (383 aa).

Residues 152–365 (MVAHELRTPL…CFTFTVPIWQ (214 aa)) enclose the Histidine kinase domain. At histidine 155 the chain carries Phosphohistidine; by autocatalysis.

Homooligomerizes. Interacts with KaiC. Participates in the KaiABC clock complex, whose core is composed of a KaiC homohexamer, 6 KaiB and up to 6 KaiA dimers. SasA and KaiB(fs) compete to bind to KaiC.

The enzyme catalyses ATP + protein L-histidine = ADP + protein N-phospho-L-histidine.. Its function is as follows. Member of the two-component regulatory system SasA/RpaA involved in genome-wide circadian gene expression. One of several clock output pathways. Participates in the Kai clock protein complex, the main circadian regulator in cyanobacteria, via its interaction with KaiC. KaiC enhances the autophosphorylation activity of SasA, which then transfers its phosphate group to RpaA to activate it. In addition to its output function, recruits fold-shifted KaiB (KaiB(fs)) to KaiC to cooperatively form the KaiB(6):KaiC(6) complex (independent of SasA kinase activity). Required for robustness of the circadian rhythm of gene expression and is involved in clock output, also required for adaptation to light/dark cycles. The protein is Adaptive-response sensory kinase SasA of Parasynechococcus marenigrum (strain WH8102).